Here is a 441-residue protein sequence, read N- to C-terminus: BTB/POZ domain-containing protein At2g24240 (441 aa).

Residues 6–76 (DRIKFNVGGR…LRTGDLNVPA (71 aa)) enclose the BTB domain.

Its pathway is protein modification; protein ubiquitination. Its function is as follows. May act as a substrate-specific adapter of an E3 ubiquitin-protein ligase complex (CUL3-RBX1-BTB) which mediates the ubiquitination and subsequent proteasomal degradation of target proteins. The polypeptide is BTB/POZ domain-containing protein At2g24240 (Arabidopsis thaliana (Mouse-ear cress)).